A 549-amino-acid polypeptide reads, in one-letter code: Dihydroxy-acid dehydratase (549 aa).

D78 is a Mg(2+) binding site. Position 119 (C119) interacts with [2Fe-2S] cluster. 2 residues coordinate Mg(2+): D120 and K121. The residue at position 121 (K121) is an N6-carboxylysine. C192 is a [2Fe-2S] cluster binding site. E439 lines the Mg(2+) pocket. Catalysis depends on S465, which acts as the Proton acceptor.

The protein belongs to the IlvD/Edd family. Homodimer. The cofactor is [2Fe-2S] cluster. Mg(2+) serves as cofactor.

It catalyses the reaction (2R)-2,3-dihydroxy-3-methylbutanoate = 3-methyl-2-oxobutanoate + H2O. The catalysed reaction is (2R,3R)-2,3-dihydroxy-3-methylpentanoate = (S)-3-methyl-2-oxopentanoate + H2O. The protein operates within amino-acid biosynthesis; L-isoleucine biosynthesis; L-isoleucine from 2-oxobutanoate: step 3/4. It participates in amino-acid biosynthesis; L-valine biosynthesis; L-valine from pyruvate: step 3/4. Its function is as follows. Functions in the biosynthesis of branched-chain amino acids. Catalyzes the dehydration of (2R,3R)-2,3-dihydroxy-3-methylpentanoate (2,3-dihydroxy-3-methylvalerate) into 2-oxo-3-methylpentanoate (2-oxo-3-methylvalerate) and of (2R)-2,3-dihydroxy-3-methylbutanoate (2,3-dihydroxyisovalerate) into 2-oxo-3-methylbutanoate (2-oxoisovalerate), the penultimate precursor to L-isoleucine and L-valine, respectively. The polypeptide is Dihydroxy-acid dehydratase (Endomicrobium trichonymphae).